The primary structure comprises 100 residues: Urease subunit gamma (100 aa).

Belongs to the urease gamma subunit family. As to quaternary structure, heterotrimer of UreA (gamma), UreB (beta) and UreC (alpha) subunits. Three heterotrimers associate to form the active enzyme.

The protein localises to the cytoplasm. It catalyses the reaction urea + 2 H2O + H(+) = hydrogencarbonate + 2 NH4(+). The protein operates within nitrogen metabolism; urea degradation; CO(2) and NH(3) from urea (urease route): step 1/1. The polypeptide is Urease subunit gamma (Saccharophagus degradans (strain 2-40 / ATCC 43961 / DSM 17024)).